The following is a 408-amino-acid chain: Dual-specificity RNA methyltransferase RlmN (408 aa).

The active-site Proton acceptor is Glu122. The 242-residue stretch at 128–369 (EEDRGTLCIS…NRAGYASPIR (242 aa)) folds into the Radical SAM core domain. An intrachain disulfide couples Cys135 to Cys380. 3 residues coordinate [4Fe-4S] cluster: Cys142, Cys146, and Cys149. S-adenosyl-L-methionine-binding positions include 206-207 (GE), Ser238, 260-262 (SLH), and Asn337. Catalysis depends on Cys380, which acts as the S-methylcysteine intermediate.

Belongs to the radical SAM superfamily. RlmN family. Requires [4Fe-4S] cluster as cofactor.

Its subcellular location is the cytoplasm. The catalysed reaction is adenosine(2503) in 23S rRNA + 2 reduced [2Fe-2S]-[ferredoxin] + 2 S-adenosyl-L-methionine = 2-methyladenosine(2503) in 23S rRNA + 5'-deoxyadenosine + L-methionine + 2 oxidized [2Fe-2S]-[ferredoxin] + S-adenosyl-L-homocysteine. It catalyses the reaction adenosine(37) in tRNA + 2 reduced [2Fe-2S]-[ferredoxin] + 2 S-adenosyl-L-methionine = 2-methyladenosine(37) in tRNA + 5'-deoxyadenosine + L-methionine + 2 oxidized [2Fe-2S]-[ferredoxin] + S-adenosyl-L-homocysteine. In terms of biological role, specifically methylates position 2 of adenine 2503 in 23S rRNA and position 2 of adenine 37 in tRNAs. m2A2503 modification seems to play a crucial role in the proofreading step occurring at the peptidyl transferase center and thus would serve to optimize ribosomal fidelity. This Chelativorans sp. (strain BNC1) protein is Dual-specificity RNA methyltransferase RlmN.